The chain runs to 684 residues: Threonine--tRNA ligase (684 aa).

Residues 1-66 enclose the TGS domain; the sequence is MTVPATDSWP…DTDAEVVPVA (66 aa). The interval 261–567 is catalytic; it reads DHRKLGSELD…LTEHYAGAFP (307 aa). Cys-366, His-417, and His-544 together coordinate Zn(2+).

Belongs to the class-II aminoacyl-tRNA synthetase family. Homodimer. Zn(2+) is required as a cofactor.

It is found in the cytoplasm. It carries out the reaction tRNA(Thr) + L-threonine + ATP = L-threonyl-tRNA(Thr) + AMP + diphosphate + H(+). Functionally, catalyzes the attachment of threonine to tRNA(Thr) in a two-step reaction: L-threonine is first activated by ATP to form Thr-AMP and then transferred to the acceptor end of tRNA(Thr). Also edits incorrectly charged L-seryl-tRNA(Thr). The polypeptide is Threonine--tRNA ligase (Mycobacterium avium (strain 104)).